The chain runs to 54 residues: U-myrmicitoxin(01)-Tb5a (54 aa).

Positions M1–A26 are cleaved as a signal peptide. Residues D27 to V38 constitute a propeptide that is removed on maturation.

This sequence belongs to the formicidae venom precursor-01 superfamily. Contains 1 disulfide bond. Expressed by the venom gland.

The protein resides in the secreted. The sequence is that of U-myrmicitoxin(01)-Tb5a from Tetramorium bicarinatum (Tramp ant).